Here is a 464-residue protein sequence, read N- to C-terminus: MIPVRGFSGETIAVLGLGRSGLATARALRAGGATPLCWDDNTEARARAEAEGFACAPLKHADAFDGVAALITSPGIPHLYPTPNPTIALAMSLGIPVDNDIGLFFRSFATPDWDEFDSLPRVIAVTGSNGKSTTSALIHHVLTAAGRPTQLAGNIGRGVLDIDPGEDGGIVVLELSSYQTELARALTPDIAVFTNLSPDHLDRHGGMGGYFAAKRRLFTIGGPDRAVIGTDEPEGLFLASQLSVAPADDRVIRVTSAKPSGPGWVVSARKGFLAEHRKGRQTGSIDLRPIPGLPGAHNHQNAACAYAACRSLGLAPRQIEAGFASFKGLPHRSQIVGTANGVTFVNDSKATNVDSAAKALQAFDRIRWIAGGLEKEGGLAALTPHLGGVRKAYLIGRSAAEFALGIPDTPHEVCETMARAVAAAVAEAEPGDTILLAPAAASFDQYDNFERRGEDFIAEVAKYL.

ATP is bound at residue 127-133; it reads GSNGKST.

This sequence belongs to the MurCDEF family.

It localises to the cytoplasm. It catalyses the reaction UDP-N-acetyl-alpha-D-muramoyl-L-alanine + D-glutamate + ATP = UDP-N-acetyl-alpha-D-muramoyl-L-alanyl-D-glutamate + ADP + phosphate + H(+). The protein operates within cell wall biogenesis; peptidoglycan biosynthesis. Cell wall formation. Catalyzes the addition of glutamate to the nucleotide precursor UDP-N-acetylmuramoyl-L-alanine (UMA). The protein is UDP-N-acetylmuramoylalanine--D-glutamate ligase of Dinoroseobacter shibae (strain DSM 16493 / NCIMB 14021 / DFL 12).